The primary structure comprises 248 residues: Anamorsin homolog (248 aa).

The N-terminal SAM-like domain stretch occupies residues 4–129 (FKGLQKSLYI…ETGSSARLSF (126 aa)). The interval 130-161 (AKKNANAVNVWKISGDDEELIDEEELLDEEDK) is linker. [2Fe-2S] cluster is bound by residues Cys-172, Cys-181, Cys-184, and Cys-186. Residues 172–186 (CSTTGKRKACKNCSC) are fe-S binding site A. [4Fe-4S] cluster-binding residues include Cys-209, Cys-212, Cys-220, and Cys-223. 2 consecutive short sequence motifs (cx2C motif) follow at residues 209-212 (CGNC) and 220-223 (CSTC). The segment at 209 to 223 (CGNCYLGDAFRCSTC) is fe-S binding site B.

Belongs to the anamorsin family. Monomer. [2Fe-2S] cluster is required as a cofactor. Requires [4Fe-4S] cluster as cofactor.

It is found in the cytoplasm. It localises to the mitochondrion intermembrane space. Functionally, component of the cytosolic iron-sulfur (Fe-S) protein assembly (CIA) machinery. Required for the maturation of extramitochondrial Fe-S proteins. Part of an electron transfer chain functioning in an early step of cytosolic Fe-S biogenesis, facilitating the de novo assembly of a [4Fe-4S] cluster on the cytosolic Fe-S scaffold complex. Electrons are transferred from NADPH via a FAD- and FMN-containing diflavin oxidoreductase. Together with the diflavin oxidoreductase, also required for the assembly of the diferric tyrosyl radical cofactor of ribonucleotide reductase (RNR), probably by providing electrons for reduction during radical cofactor maturation in the catalytic small subunit. This Drosophila simulans (Fruit fly) protein is Anamorsin homolog.